Here is a 405-residue protein sequence, read N- to C-terminus: Transcriptional regulatory protein DEP1 (405 aa).

The segment covering 1–12 has biased composition (low complexity); it reads MSQQTPQESEQT. Disordered stretches follow at residues 1–26 and 49–171; these read MSQQ…SVLS and AGTE…VMPS. Phosphoserine is present on serine 56. Composition is skewed to basic and acidic residues over residues 86-108 and 116-139; these read SLKR…KVPG and EEEK…ARDE. At serine 120 the chain carries Phosphoserine. Acidic residues predominate over residues 140–157; the sequence is QGDEGDNEEENNEEDNEN. Position 370 is a phosphoserine (serine 370).

Component of the RPD3C(L) complex composed of at least ASH1, CTI6, DEP1, PHO23, RPD3, RXT2, RXT3, SAP30, SDS3, SIN3, UME1 and UME6.

The protein localises to the cytoplasm. It localises to the nucleus. Functionally, component of the RPD3C(L) histone deacetylase complex (HDAC) responsible for the deacetylation of lysine residues on the N-terminal part of the core histones (H2A, H2B, H3 and H4). Histone deacetylation gives a tag for epigenetic repression and plays an important role in transcriptional regulation, cell cycle progression and developmental events. In Saccharomyces cerevisiae (strain ATCC 204508 / S288c) (Baker's yeast), this protein is Transcriptional regulatory protein DEP1 (DEP1).